The chain runs to 224 residues: Small ribosomal subunit protein uS3 (224 aa).

One can recognise a KH type-2 domain in the interval 39 to 107 (VRKYIQNALA…PVHINIEEIR (69 aa)).

It belongs to the universal ribosomal protein uS3 family. Part of the 30S ribosomal subunit. Forms a tight complex with proteins S10 and S14.

Its function is as follows. Binds the lower part of the 30S subunit head. Binds mRNA in the 70S ribosome, positioning it for translation. This chain is Small ribosomal subunit protein uS3, found in Saccharophagus degradans (strain 2-40 / ATCC 43961 / DSM 17024).